Consider the following 489-residue polypeptide: MRPPALLALFSCSAAFALMSEEIKEKVTPSQDLRQSSLPGRHDIDLKEIVFVIQSQSNSFHAKRAEQLKKNILKQAANLTQDLPRVLLLHQLAKQEGAWTILPLLPHFSVTYSKNSAWIFFCEEETRLQIPRLLDTLRRYDPSKEWFLGKALYDEESTIIHHYAFSENPTVFKYPDFAAGWALSIPLVNKLAKRLKSEALKSDFTIDLKHEIALYIWDKGGGPALTPVPEFCTEDVDPRCVTTFHSFLPLCGVPVKKEEIFVAVKTCKKFHADRIPIVKKTWAAQASLIEYYSDYAETAIPTVDLGIPNTDRGHCGKTFAILEKFLNHSHNKISWLVIVDDDTLISISRLRHLLSCYDSSDPVFLGERYGYGLGTGGYSYVTGGGGMVFSREAIRRLLVSSCRCYSNDAPDDMVLGMCFSGLGVPVTHSPLFHQARPVDYPKDYLAHQIPVSFHKHWHIDPVKVYLTWLAPSEEDQATQETQKDPREEL.

Met1 is a topological domain (cytoplasmic). Residues 2–22 traverse the membrane as a helical; Signal-anchor for type II membrane protein segment; the sequence is RPPALLALFSCSAAFALMSEE. Over 23–489 the chain is Lumenal; it reads IKEKVTPSQD…ETQKDPREEL (467 aa). N-linked (GlcNAc...) asparagine glycosylation is present at Asn78. Residues 486 to 489 carry the Prevents secretion from ER motif; that stretch reads REEL.

The protein belongs to the glycosyltransferase 31 family.

The protein localises to the endoplasmic reticulum membrane. The protein operates within protein modification; protein glycosylation. Its function is as follows. O-glucosyltransferase that transfers glucose toward fucose with a beta-1,3 linkage. Specifically glucosylates O-linked fucosylglycan on TSP type-1 domains of proteins, thereby contributing to elongation of O-fucosylglycan. The polypeptide is Beta-1,3-glucosyltransferase (Mus musculus (Mouse)).